The chain runs to 182 residues: Adenine phosphoribosyltransferase (182 aa).

Belongs to the purine/pyrimidine phosphoribosyltransferase family. As to quaternary structure, homodimer.

It localises to the cytoplasm. The enzyme catalyses AMP + diphosphate = 5-phospho-alpha-D-ribose 1-diphosphate + adenine. It participates in purine metabolism; AMP biosynthesis via salvage pathway; AMP from adenine: step 1/1. Functionally, catalyzes a salvage reaction resulting in the formation of AMP, that is energically less costly than de novo synthesis. This is Adenine phosphoribosyltransferase from Pseudomonas aeruginosa (strain LESB58).